The primary structure comprises 416 residues: Glutamyl-tRNA reductase (416 aa).

Substrate is bound by residues 49–52, Ser105, 110–112, and Gln116; these read TCNR and EPQ. The Nucleophile role is filled by Cys50. 185–190 is a binding site for NADP(+); it reads GAGETI.

This sequence belongs to the glutamyl-tRNA reductase family. As to quaternary structure, homodimer.

It carries out the reaction (S)-4-amino-5-oxopentanoate + tRNA(Glu) + NADP(+) = L-glutamyl-tRNA(Glu) + NADPH + H(+). It participates in porphyrin-containing compound metabolism; protoporphyrin-IX biosynthesis; 5-aminolevulinate from L-glutamyl-tRNA(Glu): step 1/2. Its function is as follows. Catalyzes the NADPH-dependent reduction of glutamyl-tRNA(Glu) to glutamate 1-semialdehyde (GSA). The chain is Glutamyl-tRNA reductase from Shewanella oneidensis (strain ATCC 700550 / JCM 31522 / CIP 106686 / LMG 19005 / NCIMB 14063 / MR-1).